Reading from the N-terminus, the 216-residue chain is MKFFIDTANFEEIKEAHAWGILSGVTTNPSLVAKEENVSFHDRLREIAELVDGSVSGEVIALDAEGMIKEGLELAAIAPNITVKLPMTPAGLEACRFFANKGIKTNVTLIFSANQALMAARAGATYVSPFIGRLDDIGQNGVELIETIADMFTIHNIDTQIIAASVRHPQHVTAAALAGAHISTTPFKVLKQLFHHPLTEKGIEGFLADWNKRKGE.

Catalysis depends on Lys-84, which acts as the Schiff-base intermediate with substrate.

This sequence belongs to the transaldolase family. Type 3B subfamily.

It localises to the cytoplasm. It carries out the reaction D-sedoheptulose 7-phosphate + D-glyceraldehyde 3-phosphate = D-erythrose 4-phosphate + beta-D-fructose 6-phosphate. Its pathway is carbohydrate degradation; pentose phosphate pathway; D-glyceraldehyde 3-phosphate and beta-D-fructose 6-phosphate from D-ribose 5-phosphate and D-xylulose 5-phosphate (non-oxidative stage): step 2/3. Its function is as follows. Transaldolase is important for the balance of metabolites in the pentose-phosphate pathway. This is Probable transaldolase from Lysinibacillus sphaericus (strain C3-41).